A 388-amino-acid chain; its full sequence is Mannitol-1-phosphate 5-dehydrogenase (388 aa).

Position 5–16 (5–16 (AIQFGGGNIGRG)) interacts with NAD(+). Lys-213 is a catalytic residue.

This sequence belongs to the mannitol dehydrogenase family. As to quaternary structure, monomer.

It catalyses the reaction D-mannitol 1-phosphate + NAD(+) = beta-D-fructose 6-phosphate + NADH + H(+). Catalyzes the NAD(H)-dependent interconversion of D-fructose 6-phosphate and D-mannitol 1-phosphate in the mannitol metabolic pathway. The protein is Mannitol-1-phosphate 5-dehydrogenase (mpdA) of Neosartorya fischeri (strain ATCC 1020 / DSM 3700 / CBS 544.65 / FGSC A1164 / JCM 1740 / NRRL 181 / WB 181) (Aspergillus fischerianus).